A 274-amino-acid chain; its full sequence is MNFTDMLRAATARHGSLLCVGLDPEPARFPAGMQGDARKIYDFCAAVVDATADLVCAFKPQIAYFAAHGAEAQLERLMQHMRSNAPQVPVILDAKRGDIGATAEQYAKEAFERYGADAVTLSPFMGFDSIAPYLAYRGKGAFLLCRTSNPGGDDLQNQRLASVAGQPLLYEHLASLAQGPWNRNGQLGLVVGATYPQEIERVRSLAPTLPLLIPGVGAQGGDAAAAVRAGLRSDAPIIVNSSRTILYAGAGADFAGAARAQALRMRALLQAARR.

Lysine 95 (proton donor) is an active-site residue.

The protein belongs to the OMP decarboxylase family. Type 2 subfamily.

The enzyme catalyses orotidine 5'-phosphate + H(+) = UMP + CO2. It participates in pyrimidine metabolism; UMP biosynthesis via de novo pathway; UMP from orotate: step 2/2. The protein is Orotidine 5'-phosphate decarboxylase of Verminephrobacter eiseniae (strain EF01-2).